The chain runs to 177 residues: R-phycoerythrin beta chain (177 aa).

2 residues coordinate phycourobilin: cysteine 50 and cysteine 61. Asparagine 72 bears the N4-methylasparagine mark. Cysteine 82 and cysteine 158 together coordinate (2R,3E)-phycoerythrobilin.

It belongs to the phycobiliprotein family. Heterodimer of an alpha and a beta chain. Post-translationally, contains two covalently linked phycoerythrobilin chromophores and one covalently linked phycourobilin chromophore.

The protein resides in the plastid. It is found in the chloroplast thylakoid membrane. Light-harvesting photosynthetic bile pigment-protein from the phycobiliprotein complex. The chain is R-phycoerythrin beta chain (cpeB) from Lophosiphonia boldii (Red alga).